We begin with the raw amino-acid sequence, 505 residues long: ATP synthase subunit alpha (505 aa).

Residue 171 to 178 (GDRQTGKT) participates in ATP binding.

The protein belongs to the ATPase alpha/beta chains family. F-type ATPases have 2 components, CF(1) - the catalytic core - and CF(0) - the membrane proton channel. CF(1) has five subunits: alpha(3), beta(3), gamma(1), delta(1), epsilon(1). CF(0) has three main subunits: a(1), b(2) and c(9-12). The alpha and beta chains form an alternating ring which encloses part of the gamma chain. CF(1) is attached to CF(0) by a central stalk formed by the gamma and epsilon chains, while a peripheral stalk is formed by the delta and b chains.

The protein resides in the cell inner membrane. It catalyses the reaction ATP + H2O + 4 H(+)(in) = ADP + phosphate + 5 H(+)(out). Its function is as follows. Produces ATP from ADP in the presence of a proton gradient across the membrane. The alpha chain is a regulatory subunit. This is ATP synthase subunit alpha from Nitratiruptor sp. (strain SB155-2).